The sequence spans 1333 residues: Vascular endothelial growth factor receptor 1 (1333 aa).

Residues methionine 1–glycine 22 form the signal peptide. The Extracellular segment spans residues tyrosine 23–glutamate 759. Ig-like C2-type domains are found at residues proline 32–serine 124, glycine 152–histidine 215, leucine 231–histidine 328, phenylalanine 334–proline 429, glutamine 430–lysine 550, proline 557–valine 656, and proline 662–threonine 748. 2 disulfides stabilise this stretch: cysteine 53–cysteine 108 and cysteine 159–cysteine 208. Residues asparagine 101, asparagine 165, asparagine 197, and asparagine 252 are each glycosylated (N-linked (GlcNAc...) asparagine). Cysteine 253 and cysteine 312 form a disulfide bridge. Residues asparagine 324, asparagine 418, asparagine 475, asparagine 517, asparagine 598, asparagine 626, asparagine 667, and asparagine 714 are each glycosylated (N-linked (GlcNAc...) asparagine). Disulfide bonds link cysteine 455-cysteine 536 and cysteine 578-cysteine 637. The cysteines at positions 683 and 732 are disulfide-linked. A helical transmembrane segment spans residues leucine 760–isoleucine 781. Residues arginine 782–alanine 1333 lie on the Cytoplasmic side of the membrane. The region spanning leucine 828–leucine 1158 is the Protein kinase domain. Residues leucine 834–valine 842 and lysine 862 contribute to the ATP site. Phosphotyrosine; by autocatalysis is present on tyrosine 915. The disordered stretch occupies residues glutamate 947 to aspartate 983. The segment covering serine 960–serine 970 has biased composition (low complexity). The active-site Proton acceptor is aspartate 1022. Tyrosine 1053, tyrosine 1169, tyrosine 1213, tyrosine 1242, tyrosine 1322, and tyrosine 1328 each carry phosphotyrosine; by autocatalysis.

This sequence belongs to the protein kinase superfamily. Tyr protein kinase family. CSF-1/PDGF receptor subfamily. In terms of assembly, interacts with VEGFA, VEGFB and PGF. Monomer in the absence of bound VEGFA, VEGFB or PGF. Homodimer in the presence of bound VEGFA, VEGFB and PGF. Can also form a heterodimer with KDR. Interacts (tyrosine phosphorylated) with CBL, CRK, GRB2, NCK1, PIK3R1, PLCG, PSEN1 and PTPN11. Probably interacts with PTPRB. Interacts with RACK1. Identified in a complex with CBL and CD2AP. Post-translationally, N-glycosylated. In terms of processing, ubiquitinated after VEGFA-mediated autophosphorylation, leading to proteolytic degradation. Autophosphorylated on tyrosine residues upon ligand binding. Autophosphorylation occurs in trans, i.e. one subunit of the dimeric receptor phosphorylates tyrosine residues on the other subunit. Phosphorylation at Tyr-1169 is important for interaction with PLCG. Phosphorylation at Tyr-1213 is important for interaction with PIK3R1, PTPN11, GRB2, and PLCG. Phosphorylation at Tyr-1328 is important for endocytosis and for interaction with CBL, NCK1 and CRK. Is probably dephosphorylated by PTPRB.

It is found in the cell membrane. Its subcellular location is the endosome. It carries out the reaction L-tyrosyl-[protein] + ATP = O-phospho-L-tyrosyl-[protein] + ADP + H(+). With respect to regulation, present in an inactive conformation in the absence of bound ligand. Binding of VEGFA, VEGFB or PGF leads to dimerization and activation by autophosphorylation on tyrosine residues. Functionally, tyrosine-protein kinase that acts as a cell-surface receptor for VEGFA, VEGFB and PGF, and plays an essential role in the development of embryonic vasculature, the regulation of angiogenesis, cell survival, cell migration, macrophage function, chemotaxis, and cancer cell invasion. Acts as a positive regulator of postnatal retinal hyaloid vessel regression. May play an essential role as a negative regulator of embryonic angiogenesis by inhibiting excessive proliferation of endothelial cells. Can promote endothelial cell proliferation, survival and angiogenesis in adulthood. Its function in promoting cell proliferation seems to be cell-type specific. Promotes PGF-mediated proliferation of endothelial cells, and proliferation of some types of cancer cells, but does not promote proliferation of normal fibroblasts. Has very high affinity for VEGFA and relatively low protein kinase activity; may function as a negative regulator of VEGFA signaling by limiting the amount of free VEGFA and preventing its binding to KDR. Modulates KDR signaling by forming heterodimers with KDR. Ligand binding leads to the activation of several signaling cascades. Activation of PLCG leads to the production of the cellular signaling molecules diacylglycerol and inositol 1,4,5-trisphosphate and the activation of protein kinase C. Mediates phosphorylation of PIK3R1, the regulatory subunit of phosphatidylinositol 3-kinase, leading to the activation of phosphatidylinositol kinase and the downstream signaling pathway. Mediates activation of MAPK1/ERK2, MAPK3/ERK1 and the MAP kinase signaling pathway, as well as of the AKT1 signaling pathway. Phosphorylates SRC, YES1 and PLCG, and may also phosphorylate CBL. Promotes phosphorylation of AKT1 and PTK2/FAK1. The sequence is that of Vascular endothelial growth factor receptor 1 (Flt1) from Mus musculus (Mouse).